The following is a 339-amino-acid chain: Neutrophil cytosol factor 4 (339 aa).

One can recognise a PX domain in the interval 19 to 140 (DVAVSANIAD…IFFYQSAYDA (122 aa)). A 1,2-diacyl-sn-glycero-3-phospho-(1D-myo-inositol-3-phosphate) contacts are provided by residues 58-60 (RYR) and 92-94 (KVY). A Phosphothreonine modification is found at Thr-154. One can recognise an SH3 domain in the interval 170-229 (MEAPRAEALFDFTGNSKLELSFKAGDVIFLLSKINKDWLEGTSQGATGIFPGSFVKILKD). Residues 237 to 329 (TNWLRCYFYE…FPWKLHVTQK (93 aa)) enclose the PB1 domain. Residue Ser-315 is modified to Phosphoserine.

Component of the phagocyte NADPH oxidase complex composed of an obligatory core heterodimer formed by the membrane proteins CYBA and CYBB and the cytosolic regulatory subunits NCF1/p47-phox, NCF2/p67-phox, NCF4/p40-phox and the small GTPase RAC1 or RAC2. Part of a cytosolic complex composed at least by NCF1, NCF2 and NCF4. Interacts with NCF2. Interacts with NCF1. The NCF2-NCF4 complex interacts with GBP7 (via GB1/RHD3-type G domain).

It localises to the cytoplasm. It is found in the cytosol. Its subcellular location is the endosome membrane. The protein resides in the membrane. In terms of biological role, subunit of the phagocyte NADPH oxidase complex that mediates the transfer of electrons from cytosolic NADPH to O2 to produce the superoxide anion (O2(-)). In the activated complex, electrons are first transferred from NADPH to flavin adenine dinucleotide (FAD) and subsequently transferred via two heme molecules to molecular oxygen, producing superoxide through an outer-sphere reaction. Activation of the NADPH oxidase complex is initiated by the assembly of cytosolic subunits of the NADPH oxidase complex with the core NADPH oxidase complex to form a complex at the plasma membrane or phagosomal membrane. This activation process is initiated by phosphorylation dependent binding of the cytosolic NCF1/p47-phox subunit to the C-terminus of CYBA/p22-phox. The sequence is that of Neutrophil cytosol factor 4 from Mus musculus (Mouse).